The chain runs to 384 residues: Intraflagellar transport protein 46 homolog (384 aa).

Disordered stretches follow at residues 52–151 (VNAE…PADY) and 358–384 (SATDGQKSDTPPASRSATAEIERLTLD). Residues 87 to 99 (EKLEEDTKRKKEP) are compositionally biased toward basic and acidic residues. Acidic residues predominate over residues 110 to 138 (DEEEDEDDDDDDDDDDSDDTESDEEEEEP). Residues 358 to 374 (SATDGQKSDTPPASRSA) show a composition bias toward polar residues.

It belongs to the IFT46 family.

It localises to the cytoplasm. The protein localises to the cytoskeleton. Its subcellular location is the cilium basal body. The protein resides in the cell projection. It is found in the cilium. Forms part of a complex involved in intraflagellar transport (IFT), the bi-directional movement of particles required for the assembly, maintenance and functioning of primary cilia. Plays a role in early embryonic development. The polypeptide is Intraflagellar transport protein 46 homolog (Danio rerio (Zebrafish)).